The following is a 403-amino-acid chain: S-adenosylmethionine synthase (403 aa).

His-15 provides a ligand contact to ATP. Asp-17 is a Mg(2+) binding site. Glu-43 contributes to the K(+) binding site. The L-methionine site is built by Glu-56 and Gln-99. The interval 99 to 109 (QSPHIAQGVDR) is flexible loop. ATP is bound by residues 166 to 168 (DAK), 232 to 233 (KF), Asp-241, 247 to 248 (RK), Ala-264, and Lys-268. Asp-241 serves as a coordination point for L-methionine. Lys-272 serves as a coordination point for L-methionine.

The protein belongs to the AdoMet synthase family. Homotetramer; dimer of dimers. The cofactor is Mg(2+). K(+) is required as a cofactor.

It localises to the cytoplasm. It catalyses the reaction L-methionine + ATP + H2O = S-adenosyl-L-methionine + phosphate + diphosphate. Its pathway is amino-acid biosynthesis; S-adenosyl-L-methionine biosynthesis; S-adenosyl-L-methionine from L-methionine: step 1/1. Catalyzes the formation of S-adenosylmethionine (AdoMet) from methionine and ATP. The overall synthetic reaction is composed of two sequential steps, AdoMet formation and the subsequent tripolyphosphate hydrolysis which occurs prior to release of AdoMet from the enzyme. The sequence is that of S-adenosylmethionine synthase from Stenotrophomonas maltophilia (strain K279a).